The sequence spans 87 residues: Putative defensin-like protein 235 (87 aa).

The first 26 residues, 1 to 26 (MRSATFFLVSCVLMSFVLSHVKEVEA), serve as a signal peptide directing secretion. Cystine bridges form between C46/C73, C54/C82, and C71/C84.

This sequence belongs to the DEFL family.

Its subcellular location is the secreted. This Arabidopsis thaliana (Mouse-ear cress) protein is Putative defensin-like protein 235 (SCRL26).